The sequence spans 841 residues: Taste receptor type 1 member 1 (841 aa).

The signal sequence occupies residues 1–20; sequence MLLCTARLVGLQLLISCCWA. Residues 21-567 lie on the Extracellular side of the membrane; sequence FACHSTESSP…VFLALREHTS (547 aa). Residues asparagine 87, asparagine 88, asparagine 95, asparagine 291, asparagine 479, and asparagine 529 are each glycosylated (N-linked (GlcNAc...) asparagine). The helical transmembrane segment at 568 to 588 threads the bilayer; sequence WVLLAANTLLLLLLLGTAGLF. Over 589–603 the chain is Cytoplasmic; sequence AWHLDTPVVRSAGGR. The helical transmembrane segment at 604 to 624 threads the bilayer; the sequence is LCFLMLGSLAAGSGSLYGFFG. Residues 625–639 lie on the Extracellular side of the membrane; sequence EPTRPACLLRQALFA. Residues 640–660 traverse the membrane as a helical segment; the sequence is LGFTIFLSCLTVRSFQLIIIF. At 661-680 the chain is on the cytoplasmic side; sequence KFSTKVPTFYHAWVQNHGAG. A helical transmembrane segment spans residues 681 to 701; that stretch reads LFVMISSAAQLLICLTWLVVW. Over 702-725 the chain is Extracellular; sequence TPLPAREYQRFPHLVMLECTETNS. A helical membrane pass occupies residues 726 to 746; the sequence is LGFILAFLYNGLLSISAFACS. Residues 747–761 are Cytoplasmic-facing; that stretch reads YLGKDLPENYNEAKC. Residues 762 to 782 form a helical membrane-spanning segment; sequence VTFSLLFNFVSWIAFFTTASV. Over 783–795 the chain is Extracellular; that stretch reads YDGKYLPAANMMA. The chain crosses the membrane as a helical span at residues 796-816; it reads GLSSLSSGFGGYFLPKCYVIL. At 817–841 the chain is on the cytoplasmic side; the sequence is CRPDLNSTEHFQASIQDYTRRCGST.

The protein belongs to the G-protein coupled receptor 3 family. TAS1R subfamily. As to quaternary structure, forms heterodimers with TAS1R3.

It localises to the cell membrane. Putative taste receptor. TAS1R1/TAS1R3 responds to the umami taste stimulus (the taste of monosodium glutamate). Sequence differences within and between species can significantly influence the selectivity and specificity of taste responses. The protein is Taste receptor type 1 member 1 (TAS1R1) of Homo sapiens (Human).